A 732-amino-acid chain; its full sequence is Prolyl 3-hydroxylase 3 (732 aa).

The first 19 residues, 1-19, serve as a signal peptide directing secretion; sequence MLRLLRLLLLLLLPPPGSP. Positions 15 to 25 are enriched in pro residues; it reads PPGSPEPPEPP. A disordered region spans residues 15–35; that stretch reads PPGSPEPPEPPGLAQLSPGSP. TPR repeat units follow at residues 39–72, 152–185, 214–247, and 312–345; these read PDLL…RAAL, REPY…NPTH, YWAA…SLAH, and LSQL…YPED. 2 N-linked (GlcNAc...) asparagine glycosylation sites follow: Asn327 and Asn458. In terms of domain architecture, Fe2OG dioxygenase spans 557–671; that stretch reads THLVCRSAIE…RCALALWHTW (115 aa). His580, Asp582, and His652 together coordinate Fe cation. Residue Arg662 is part of the active site. Residues 674–703 are a coiled coil; it reads EHSEQEWTEAKELLQEEEEEEEEEDILSRD. The span at 676–687 shows a compositional bias: basic and acidic residues; it reads SEQEWTEAKELL. Residues 676–732 form a disordered region; sequence SEQEWTEAKELLQEEEEEEEEEDILSRDPSPEPPSHKLQRVQEKAGKPRRVRVREEL. The span at 688-698 shows a compositional bias: acidic residues; sequence QEEEEEEEEED. Over residues 722-732 the composition is skewed to basic residues; sequence KPRRVRVREEL. The Prevents secretion from ER motif lies at 729 to 732; sequence REEL.

The protein belongs to the leprecan family. Identified in a complex with PLOD1 and P3H4. Requires Fe cation as cofactor. L-ascorbate serves as cofactor. As to expression, detected in kidney (at protein level).

It is found in the endoplasmic reticulum. The catalysed reaction is L-prolyl-[collagen] + 2-oxoglutarate + O2 = trans-3-hydroxy-L-prolyl-[collagen] + succinate + CO2. Functionally, part of a complex composed of PLOD1, P3H3 and P3H4 that catalyzes hydroxylation of lysine residues in collagen alpha chains and is required for normal assembly and cross-linkling of collagen fibrils. Required for normal hydroxylation of lysine residues in type I collagen chains in skin, bone, tendon, aorta and cornea. Required for normal skin stability via its role in hydroxylation of lysine residues in collagen alpha chains and in collagen fibril assembly. Apparently not required for normal prolyl 3-hydroxylation on collagen chains, possibly because it functions redundantly with other prolyl 3-hydroxylases. The polypeptide is Prolyl 3-hydroxylase 3 (Mus musculus (Mouse)).